Reading from the N-terminus, the 348-residue chain is Probable dual-specificity RNA methyltransferase RlmN (348 aa).

Glu-93 acts as the Proton acceptor in catalysis. Residues Thr-99–Asp-333 form the Radical SAM core domain. Residues Cys-106 and Cys-338 are joined by a disulfide bond. Residues Cys-113, Cys-117, and Cys-120 each contribute to the [4Fe-4S] cluster site. S-adenosyl-L-methionine-binding positions include Gly-160 to Glu-161, Ser-190, Ser-219 to His-221, and Asn-295. The active-site S-methylcysteine intermediate is the Cys-338.

It belongs to the radical SAM superfamily. RlmN family. [4Fe-4S] cluster serves as cofactor.

It is found in the cytoplasm. The catalysed reaction is adenosine(2503) in 23S rRNA + 2 reduced [2Fe-2S]-[ferredoxin] + 2 S-adenosyl-L-methionine = 2-methyladenosine(2503) in 23S rRNA + 5'-deoxyadenosine + L-methionine + 2 oxidized [2Fe-2S]-[ferredoxin] + S-adenosyl-L-homocysteine. It carries out the reaction adenosine(37) in tRNA + 2 reduced [2Fe-2S]-[ferredoxin] + 2 S-adenosyl-L-methionine = 2-methyladenosine(37) in tRNA + 5'-deoxyadenosine + L-methionine + 2 oxidized [2Fe-2S]-[ferredoxin] + S-adenosyl-L-homocysteine. Functionally, specifically methylates position 2 of adenine 2503 in 23S rRNA and position 2 of adenine 37 in tRNAs. The polypeptide is Probable dual-specificity RNA methyltransferase RlmN (Prochlorococcus marinus (strain MIT 9312)).